A 403-amino-acid chain; its full sequence is O-succinylhomoserine sulfhydrylase (403 aa).

K219 is modified (N6-(pyridoxal phosphate)lysine).

The protein belongs to the trans-sulfuration enzymes family. MetZ subfamily. Homotetramer. It depends on pyridoxal 5'-phosphate as a cofactor.

The catalysed reaction is O-succinyl-L-homoserine + hydrogen sulfide = L-homocysteine + succinate. Its pathway is amino-acid biosynthesis; L-methionine biosynthesis via de novo pathway; L-homocysteine from O-succinyl-L-homoserine: step 1/1. Functionally, catalyzes the formation of L-homocysteine from O-succinyl-L-homoserine (OSHS) and hydrogen sulfide. Cannot use the other activated form of L-homoserine, O-acetyl-L-homoserine, as a substrate. The protein is O-succinylhomoserine sulfhydrylase of Pseudomonas aeruginosa (strain ATCC 15692 / DSM 22644 / CIP 104116 / JCM 14847 / LMG 12228 / 1C / PRS 101 / PAO1).